A 217-amino-acid polypeptide reads, in one-letter code: UPF0173 metal-dependent hydrolase MJ1163 (217 aa).

It belongs to the UPF0173 family.

This chain is UPF0173 metal-dependent hydrolase MJ1163, found in Methanocaldococcus jannaschii (strain ATCC 43067 / DSM 2661 / JAL-1 / JCM 10045 / NBRC 100440) (Methanococcus jannaschii).